We begin with the raw amino-acid sequence, 233 residues long: Syntaxin-52 (233 aa).

Topologically, residues 1–209 (MASSSDPWMR…NKSMKSGCSC (209 aa)) are cytoplasmic. One can recognise a t-SNARE coiled-coil homology domain in the interval 137–199 (RQVMREQDEG…RRVQKSLALM (63 aa)). A helical; Anchor for type IV membrane protein transmembrane segment spans residues 210-230 (MSMLLSVLGIVGLALVIWLLV). Topologically, residues 231 to 233 (KYL) are vesicular.

It belongs to the syntaxin family. In terms of assembly, interacts either with VTI11 and SYP21, or with VTI11 and SYP22 in the prevacuolar compartment, or with VTI12 and SYP61 in the trans-Golgi network to form t-SNARE complexes. Expressed in root, leaf, stem, flower and silique.

The protein resides in the golgi apparatus. It localises to the trans-Golgi network membrane. Its subcellular location is the prevacuolar compartment membrane. Functionally, vesicle trafficking protein that functions in the secretory pathway. The chain is Syntaxin-52 (SYP52) from Arabidopsis thaliana (Mouse-ear cress).